The primary structure comprises 497 residues: Vacuolar-processing enzyme beta-isozyme 1 (497 aa).

An N-terminal signal peptide occupies residues 1–23; it reads MAARCWVWGFVVALLAVAAAADG. The N-linked (GlcNAc...) asparagine glycan is linked to Asn153. His180 is a catalytic residue. Cys222 (nucleophile) is an active-site residue. Cys255 and Cys269 are disulfide-bonded. The N-linked (GlcNAc...) asparagine glycan is linked to Asn340. Cystine bridges form between Cys432/Cys462 and Cys444/Cys479.

This sequence belongs to the peptidase C13 family. In terms of processing, auto-catalytic activation. Expressed in developing seeds.

It localises to the protein storage vacuole. The catalysed reaction is Hydrolysis of proteins and small molecule substrates at -Asn-|-Xaa- bonds.. Asparagine-specific endopeptidase that may be involved in processing of proteins targeted to vacuoles. Cysteine protease required for post-translational proteolysis of seed storage proteins in the protein storage vacuole (PSV) of developing seeds, by processing of proglutelin precursor to mature glutelin subunits, thus contributing to the formation of protein crystalline structures in PSV. The chain is Vacuolar-processing enzyme beta-isozyme 1 from Oryza sativa subsp. japonica (Rice).